Reading from the N-terminus, the 315-residue chain is Putative methyltransferase NSUN5C (315 aa).

S-adenosyl-L-methionine-binding positions include 50–56, Asp74, Arg79, and Asp121; that span reads VPPQAIK. The active-site Nucleophile is Cys175. Residues 245–269 form a disordered region; it reads TSASQAKASAPERTPSPAPKRKKRA.

It belongs to the class I-like SAM-binding methyltransferase superfamily. RsmB/NOP family. In terms of tissue distribution, ubiquitous.

May have S-adenosyl-L-methionine-dependent methyl-transferase activity. The sequence is that of Putative methyltransferase NSUN5C (NSUN5P2) from Homo sapiens (Human).